Here is a 130-residue protein sequence, read N- to C-terminus: Small ribosomal subunit protein uS9 (130 aa).

The protein belongs to the universal ribosomal protein uS9 family.

The sequence is that of Small ribosomal subunit protein uS9 from Bordetella pertussis (strain Tohama I / ATCC BAA-589 / NCTC 13251).